The chain runs to 411 residues: AT-hook motif nuclear-localized protein 14 (411 aa).

Disordered regions lie at residues 1–32 (MDPN…QRLT), 54–164 (ASTG…LGSV), 289–348 (KDAA…HQAG), and 366–411 (THSR…QIPD). Basic residues predominate over residues 7 to 19 (HHHHQQQQLHHLH). Residues 20-29 (QQQQQQQQQQ) are compositionally biased toward low complexity. Residues 54–66 (ASTGNAVPSSNNG) are compositionally biased toward polar residues. The Bipartite nuclear localization signal motif lies at 105–113 (KRKRGRPRK). The segment at residues 105-117 (KRKRGRPRKYVTP) is a DNA-binding region (a.T hook). Low complexity-rich tracts occupy residues 120 to 135 (ALAA…SSSA) and 144 to 159 (VTGG…SKKS). In terms of domain architecture, PPC spans 165–305 (GKTGQCFTPH…GKGDASNSGS (141 aa)). Polar residues predominate over residues 306–315 (RLTSPVSSGQ). Residues 374 to 390 (RGGGNSGHDGRGGGGYD) show a composition bias toward gly residues.

Its subcellular location is the nucleus. Transcription factor that specifically binds AT-rich DNA sequences related to the nuclear matrix attachment regions (MARs). This is AT-hook motif nuclear-localized protein 14 from Arabidopsis thaliana (Mouse-ear cress).